Consider the following 115-residue polypeptide: Large ribosomal subunit protein P2 (115 aa).

An N-acetylmethionine modification is found at Met-1. Ser-17 and Ser-19 each carry phosphoserine. N6-acetyllysine; alternate is present on Lys-21. N6-succinyllysine; alternate is present on Lys-21. The segment covering 69–90 (GAXAVAAAPGSXAPAAGSAPAA) has biased composition (low complexity). Residues 69 to 115 (GAXAVAAAPGSXAPAAGSAPAAAEEKKEEKKEESEESDDDMGFGLFD) form a disordered region. A phosphoserine mark is found at Ser-79 and Ser-86. Basic and acidic residues predominate over residues 91–101 (AEEKKEEKKEE). Phosphoserine occurs at positions 102 and 105.

The protein belongs to the eukaryotic ribosomal protein P1/P2 family. As to quaternary structure, heterodimer with RPLP1 at the lateral ribosomal stalk of the large ribosomal subunit.

In terms of biological role, plays an important role in the elongation step of protein synthesis. The sequence is that of Large ribosomal subunit protein P2 (RPLP2) from Sus scrofa (Pig).